Consider the following 642-residue polypeptide: Threonine--tRNA ligase (642 aa).

Residues 1 to 61 (MPVITLPDGS…ENDATLAIIT (61 aa)) enclose the TGS domain. Residues 243 to 534 (DHRKIGKQLD…LTEEFAGFFP (292 aa)) are catalytic. C334, H385, and H511 together coordinate Zn(2+).

This sequence belongs to the class-II aminoacyl-tRNA synthetase family. As to quaternary structure, homodimer. It depends on Zn(2+) as a cofactor.

It is found in the cytoplasm. The enzyme catalyses tRNA(Thr) + L-threonine + ATP = L-threonyl-tRNA(Thr) + AMP + diphosphate + H(+). In terms of biological role, catalyzes the attachment of threonine to tRNA(Thr) in a two-step reaction: L-threonine is first activated by ATP to form Thr-AMP and then transferred to the acceptor end of tRNA(Thr). Also edits incorrectly charged L-seryl-tRNA(Thr). This Salmonella choleraesuis (strain SC-B67) protein is Threonine--tRNA ligase.